We begin with the raw amino-acid sequence, 61 residues long: Large ribosomal subunit protein uL29 (61 aa).

It belongs to the universal ribosomal protein uL29 family.

This is Large ribosomal subunit protein uL29 from Campylobacter jejuni subsp. jejuni serotype O:6 (strain 81116 / NCTC 11828).